An 889-amino-acid chain; its full sequence is MSNPFVQIVEPLDAKEPVKKFFNLSKLEDVRYARLPFSIRVLLEAAIRNCDEFLVKKQDVENILNWKVMQHKNVEVPFKPARVILQDFTGVPAVVDFAAMRDAVKKLGGDPEKINPICPADLVIDHSIQVDFNRRSDSLQKNQDLEFERNKERFEFLKWGSQAFKNMRIIPPGSGIIHQVNLEYLARVVMDQDGYYYPDSVVGTDSHTTMVDGLGVLGWGVGGIEAEAVMLGQPISMVLPEVVGYKLLGNPQPLVTSTDIVLTITKHLRQVGVVGKFVEFFGPGVAQLSIADRATIANMCPEYGATAAYFPVDDISIGYLVQTGRDKEKVLCTKKYLEAVGMLRDFKNSSQDPDFTQVVELDLHTVVPCCSGPKRPQDKVAVSDMKKDFETCLGAKQGFKGFQIAPDRHNSVIKFNFEGCDFELAHGSVVIAAITSCTNTSNPSVMLGAGLLAKKAVEAGLTVKPYIKTSLSPGSGVVTYYLRESGVMSYLSQLGFDVVGYGCMTCIGNSGPLPDSVVEAITQGDLVAVGVLSGNRNFEGRVHPNTRANYLASPPLVIAYAIAGTVRIDFEKEPLGISASGKKIFLKDIWPTRNEIQAVERQYVIPGMFKEVYQKIETVNEAWNALDAPSDKLYTWNPKSTYIKSPPFFDGLTLALQTPKTIEDAYVLLNFGDSVTTDHISPAGNIARNSPAARYLTSRGLTPREFNSYGSRRGNDAVMARGTFANIRLVNKFIDKQGPQTIHFPSGETLDVFDAAERYKQAGHPLIVLAGKEYGAGSSRDWAAKGPFLLGVKAVLAESYERIHRSNLVGMGVIPLQYLPGEDARTLGLTGRERYTIIIPENLKPQMNIQIKLDTGKTFHAIMRFDTDVELTYFHNGGILNYMIRKMAS.

Substrate is bound by residues glutamine 86 and 205 to 207 (DSH). The [4Fe-4S] cluster site is built by cysteine 437, cysteine 503, and cysteine 506. Substrate contacts are provided by residues arginine 536, arginine 541, arginine 699, and 779–780 (SR).

The protein belongs to the aconitase/IPM isomerase family. It depends on [4Fe-4S] cluster as a cofactor.

Its subcellular location is the cytoplasm. It is found in the cytosol. It catalyses the reaction citrate = D-threo-isocitrate. Bifunctional iron sensor that switches between 2 activities depending on iron availability. Iron deprivation, promotes its mRNA binding activity through which it regulates the expression of genes involved in iron uptake, sequestration and utilization. Binds to iron-responsive elements (IRES) in the untranslated region of target mRNAs preventing for instance the translation of ferritin and aminolevulinic acid synthase and stabilizing the transferrin receptor mRNA. In terms of biological role, conversely, when cellular iron levels are high, binds a 4Fe-4S cluster which precludes RNA binding activity and promotes the aconitase activity, the isomerization of citrate to isocitrate via cis-aconitate. The protein is Cytoplasmic aconitate hydratase (ACO1) of Gallus gallus (Chicken).